Here is a 285-residue protein sequence, read N- to C-terminus: CCR4-NOT transcription complex subunit 7 (285 aa).

A divalent metal cation is bound by residues Asp40, Glu42, Asp161, Asp230, and Glu278.

This sequence belongs to the CAF1 family. Component of the CCR4-NOT complex. Mn(2+) serves as cofactor. The cofactor is Mg(2+). Requires Co(2+) as cofactor.

The protein resides in the nucleus. Its subcellular location is the cytoplasm. It catalyses the reaction Exonucleolytic cleavage of poly(A) to 5'-AMP.. Functionally, has 3'-5' poly(A) exoribonuclease activity for synthetic poly(A) RNA substrate. Catalytic component of the CCR4-NOT complex which is one of the major cellular mRNA deadenylases and is linked to various cellular processes including bulk mRNA degradation, miRNA-mediated repression, translational repression during translational initiation and general transcription regulation. During miRNA-mediated repression the complex also seems to act as translational repressor during translational initiation. Additional complex functions may be a consequence of its influence on mRNA expression. The protein is CCR4-NOT transcription complex subunit 7 (cnot7) of Xenopus tropicalis (Western clawed frog).